Consider the following 102-residue polypeptide: Omega-hexatoxin-Hi2a (102 aa).

Residues 1-23 form the signal peptide; the sequence is MKFSKLSLTLALILTQALLVVCG. Positions 24 to 56 are excised as a propeptide; the sequence is KINEDFMENGLESHALHDEIRKPIDTEKADAER. Intrachain disulfides connect C61–C75, C68–C81, and C74–C86. L98 carries the leucine amide modification. The propeptide occupies 100-102; sequence RAL.

This sequence belongs to the neurotoxin 15 family. 02 (omega-actx) subfamily. In terms of tissue distribution, expressed by the venom gland.

The protein resides in the secreted. Potent inhibitor of insect, but not mammalian, voltage-gated calcium channels (Cav). The protein is Omega-hexatoxin-Hi2a of Hadronyche infensa (Fraser island funnel-web spider).